The chain runs to 246 residues: 3-deoxy-manno-octulosonate cytidylyltransferase (246 aa).

This sequence belongs to the KdsB family.

Its subcellular location is the cytoplasm. The enzyme catalyses 3-deoxy-alpha-D-manno-oct-2-ulosonate + CTP = CMP-3-deoxy-beta-D-manno-octulosonate + diphosphate. It functions in the pathway nucleotide-sugar biosynthesis; CMP-3-deoxy-D-manno-octulosonate biosynthesis; CMP-3-deoxy-D-manno-octulosonate from 3-deoxy-D-manno-octulosonate and CTP: step 1/1. The protein operates within bacterial outer membrane biogenesis; lipopolysaccharide biosynthesis. Activates KDO (a required 8-carbon sugar) for incorporation into bacterial lipopolysaccharide in Gram-negative bacteria. The polypeptide is 3-deoxy-manno-octulosonate cytidylyltransferase (Rickettsia akari (strain Hartford)).